Consider the following 444-residue polypeptide: Deoxyguanosinetriphosphate triphosphohydrolase-like protein (444 aa).

Positions 59–250 constitute an HD domain; sequence RLTHSLEVSQ…MELADDIAYA (192 aa).

This sequence belongs to the dGTPase family. Type 2 subfamily.

The polypeptide is Deoxyguanosinetriphosphate triphosphohydrolase-like protein (Shewanella halifaxensis (strain HAW-EB4)).